A 291-amino-acid polypeptide reads, in one-letter code: MDARAINSREKADLKYPRNTYIIGDVQGCYRELQELLELIQFDSTKDRLGFVGDLVNRGPNSLEVLRFLKSLSSPLIVLGNHDLYLLILGYGLMPEDSYEHTLHAVLQAPDKLELLEWLRHSPLIRYEKSLSAVLVHAGLPPQWNIKESILHAEEISTALKGPHYLAFLKNLFGNEPSQWKEDLEGQDRLRYICNAFTRMRFCDAKGHLDLESEGKTNQAPSRFRPWFEWRNPQEDNVDIVFGHWAALNGQSSAPHTHALDTGCAWGYKLTAINLKTKERFSVPCQSALRM.

It belongs to the Ap4A hydrolase family.

The enzyme catalyses P(1),P(4)-bis(5'-adenosyl) tetraphosphate + H2O = 2 ADP + 2 H(+). In terms of biological role, hydrolyzes diadenosine 5',5'''-P1,P4-tetraphosphate to yield ADP. The chain is Bis(5'-nucleosyl)-tetraphosphatase, symmetrical from Coxiella burnetii (strain RSA 331 / Henzerling II).